We begin with the raw amino-acid sequence, 223 residues long: Thymidine kinase (223 aa).

Residues 19-26 (GPMFAGKT) and 96-99 (DEVQ) each bind ATP. Glu-97 (proton acceptor) is an active-site residue. 4 residues coordinate Zn(2+): Cys-153, Cys-156, Cys-191, and His-194.

The protein belongs to the thymidine kinase family. Homotetramer.

It localises to the cytoplasm. It catalyses the reaction thymidine + ATP = dTMP + ADP + H(+). This chain is Thymidine kinase, found in Ureaplasma parvum serovar 3 (strain ATCC 27815 / 27 / NCTC 11736).